Consider the following 278-residue polypeptide: Phosphoenolpyruvate carboxylase kinase 2 (278 aa).

One can recognise a Protein kinase domain in the interval 11–269 (YQLCDEIGRG…AEDALRHSWM (259 aa)). ATP-binding positions include 17 to 25 (IGRGRFGTI) and K40. Catalysis depends on D137, which acts as the Proton acceptor.

The protein belongs to the protein kinase superfamily. Ser/Thr protein kinase family. Expressed in flowers and roots, and at lower levels in cauline leaves. Barely detectable in rosette leaves and stems.

The enzyme catalyses L-seryl-[protein] + ATP = O-phospho-L-seryl-[protein] + ADP + H(+). The catalysed reaction is L-threonyl-[protein] + ATP = O-phospho-L-threonyl-[protein] + ADP + H(+). Functionally, calcium-independent kinase involved in light-dependent phosphoenolpyruvate carboxylase phosphorylation. The polypeptide is Phosphoenolpyruvate carboxylase kinase 2 (PPCK2) (Arabidopsis thaliana (Mouse-ear cress)).